The primary structure comprises 496 residues: Protein RepS (496 aa).

A DNA-binding region spans residues 120–141; the sequence is SDILTTAIDLGFMPTLIIKSDK.

Its function is as follows. Essential for replication. This Streptococcus pyogenes protein is Protein RepS (repS).